The following is a 1755-amino-acid chain: Transposon Ty1-GR2 Gag-Pol polyprotein (1755 aa).

Low complexity predominate over residues 1–16 (MESQQLSQHSHISHGS). Disordered stretches follow at residues 1-93 (MESQ…MMTQ), 126-173 (PQSQ…RPPP), and 352-421 (GSRN…SKST). Composition is skewed to polar residues over residues 48–60 (TKANSQQTTTPAS) and 127–152 (QSQFPQYPSSVGTPLSTPSPESGNTF). Over residues 153-165 (TDSSSADSDMTST) the composition is skewed to low complexity. Positions 299–401 (NNGIHINNKV…NSKSKTARAH (103 aa)) are RNA-binding. Positions 402–418 (NVSTSNNSPSTDNDSIS) are enriched in low complexity. At Ser416 the chain carries Phosphoserine. The active-site For protease activity; shared with dimeric partner is Asp461. An integrase-type zinc finger-like region spans residues 583 to 640 (NVHTSESTRKYPYPFIHRMLAHANAQTIRYSLKNNTITYFNESDVDWSSAIDYQCPDC). The region spanning 660–835 (NSYEPFQYLH…AGLDISTLLP (176 aa)) is the Integrase catalytic domain. Residues Asp671 and Asp736 each contribute to the Mg(2+) site. 3 disordered regions span residues 956–1087 (SKAV…ETEK), 1092–1111 (RSPSIDASPPENNSSHNIVP), and 1130–1187 (DLPL…DNET). Residues 960–969 (SPTDSTPPST) show a composition bias toward low complexity. The span at 1005–1015 (STPQISNIEST) shows a compositional bias: polar residues. Over residues 1038 to 1053 (ESSHASKSKDFRHSDS) the composition is skewed to basic and acidic residues. Polar residues-rich tracts occupy residues 1054 to 1082 (YSENETNHTNVPISSTGGTNNKTVPQISD) and 1101 to 1111 (PENNSSHNIVP). The Bipartite nuclear localization signal signature appears at 1178-1212 (KKRSLEDNETEIKVSRDTWNTKNMRSLEPPRSKKR). A Reverse transcriptase Ty1/copia-type domain is found at 1338 to 1476 (NNYYITQLDI…DILGLEIKYQ (139 aa)). 6 residues coordinate Mg(2+): Asp1346, Asp1427, Asp1428, Asp1610, Glu1652, and Asp1685. Residues 1610–1752 (DASYGNQPYY…IKTFKLLTNK (143 aa)) enclose the RNase H Ty1/copia-type domain.

As to quaternary structure, the capsid protein forms a homotrimer, from which the VLPs are assembled. The protease is a homodimer, whose active site consists of two apposed aspartic acid residues. Post-translationally, initially, virus-like particles (VLPs) are composed of the structural unprocessed proteins Gag and Gag-Pol, and also contain the host initiator methionine tRNA (tRNA(i)-Met) which serves as a primer for minus-strand DNA synthesis, and a dimer of genomic Ty RNA. Processing of the polyproteins occurs within the particle and proceeds by an ordered pathway, called maturation. First, the protease (PR) is released by autocatalytic cleavage of the Gag-Pol polyprotein yielding capsid protein p45 and a Pol-p154 precursor protein. This cleavage is a prerequisite for subsequent processing of Pol-p154 at the remaining sites to release the mature structural and catalytic proteins. Maturation takes place prior to the RT reaction and is required to produce transposition-competent VLPs.

The protein localises to the cytoplasm. It is found in the nucleus. The catalysed reaction is DNA(n) + a 2'-deoxyribonucleoside 5'-triphosphate = DNA(n+1) + diphosphate. The enzyme catalyses Endonucleolytic cleavage to 5'-phosphomonoester.. Capsid protein (CA) is the structural component of the virus-like particle (VLP), forming the shell that encapsulates the retrotransposons dimeric RNA genome. The particles are assembled from trimer-clustered units and there are holes in the capsid shells that allow for the diffusion of macromolecules. CA also has nucleocapsid-like chaperone activity, promoting primer tRNA(i)-Met annealing to the multipartite primer-binding site (PBS), dimerization of Ty1 RNA and initiation of reverse transcription. Its function is as follows. The aspartyl protease (PR) mediates the proteolytic cleavages of the Gag and Gag-Pol polyproteins after assembly of the VLP. Functionally, reverse transcriptase/ribonuclease H (RT) is a multifunctional enzyme that catalyzes the conversion of the retro-elements RNA genome into dsDNA within the VLP. The enzyme displays a DNA polymerase activity that can copy either DNA or RNA templates, and a ribonuclease H (RNase H) activity that cleaves the RNA strand of RNA-DNA heteroduplexes during plus-strand synthesis and hydrolyzes RNA primers. The conversion leads to a linear dsDNA copy of the retrotransposon that includes long terminal repeats (LTRs) at both ends. In terms of biological role, integrase (IN) targets the VLP to the nucleus, where a subparticle preintegration complex (PIC) containing at least integrase and the newly synthesized dsDNA copy of the retrotransposon must transit the nuclear membrane. Once in the nucleus, integrase performs the integration of the dsDNA into the host genome. This chain is Transposon Ty1-GR2 Gag-Pol polyprotein (TY1B-GR2), found in Saccharomyces cerevisiae (strain ATCC 204508 / S288c) (Baker's yeast).